A 651-amino-acid polypeptide reads, in one-letter code: Receptor-like serine/threonine-protein kinase At4g25390 (651 aa).

The N-terminal stretch at M1–A25 is a signal peptide. Residues A26 to P40 are Extracellular-facing. Residue N32 is glycosylated (N-linked (GlcNAc...) asparagine). Residues F41–C61 traverse the membrane as a helical segment. Residues K62–R651 lie on the Cytoplasmic side of the membrane. The interval K66–F87 is disordered. Residues S69–F87 are compositionally biased toward low complexity. The region spanning F99–L633 is the Protein kinase domain. ATP-binding positions include L105–V113 and K127. D225 acts as the Proton acceptor in catalysis.

It belongs to the protein kinase superfamily. Ser/Thr protein kinase family.

The protein resides in the cell membrane. The catalysed reaction is L-seryl-[protein] + ATP = O-phospho-L-seryl-[protein] + ADP + H(+). The enzyme catalyses L-threonyl-[protein] + ATP = O-phospho-L-threonyl-[protein] + ADP + H(+). The protein is Receptor-like serine/threonine-protein kinase At4g25390 of Arabidopsis thaliana (Mouse-ear cress).